A 227-amino-acid polypeptide reads, in one-letter code: Uridylate kinase (227 aa).

Lysine 7–lysine 11 is an ATP binding site. A UMP-binding site is contributed by glycine 44. Residues glycine 45 and arginine 49 each coordinate ATP. UMP contacts are provided by residues aspartate 66 and phenylalanine 114 to threonine 120. ATP is bound by residues threonine 140, asparagine 141, tyrosine 146, and aspartate 149.

This sequence belongs to the UMP kinase family. As to quaternary structure, homohexamer.

The protein resides in the cytoplasm. It catalyses the reaction UMP + ATP = UDP + ADP. The protein operates within pyrimidine metabolism; CTP biosynthesis via de novo pathway; UDP from UMP (UMPK route): step 1/1. With respect to regulation, unlike most bacteria, is not activated by GTP. UTP acts as a competitive inhibitor against both substrates. High concentration of UMP abolishes the inhibition of UTP at low ATP concentrations, indicating that UTP binds to the acceptor site (UMP site). Functionally, catalyzes the reversible phosphorylation of UMP to UDP, with ATP as the most efficient phosphate donor. Is also able to phosphorylate dUMP, although much less efficiently. This Saccharolobus solfataricus (strain ATCC 35092 / DSM 1617 / JCM 11322 / P2) (Sulfolobus solfataricus) protein is Uridylate kinase (pyrH).